We begin with the raw amino-acid sequence, 268 residues long: uncharacterized protein (268 aa).

Belongs to the glycosyltransferase 2 family.

This is an uncharacterized protein from Bacillus subtilis (strain 168).